The sequence spans 338 residues: S-adenosylmethionine:tRNA ribosyltransferase-isomerase (338 aa).

The protein belongs to the QueA family. As to quaternary structure, monomer.

It localises to the cytoplasm. The catalysed reaction is 7-aminomethyl-7-carbaguanosine(34) in tRNA + S-adenosyl-L-methionine = epoxyqueuosine(34) in tRNA + adenine + L-methionine + 2 H(+). It functions in the pathway tRNA modification; tRNA-queuosine biosynthesis. Functionally, transfers and isomerizes the ribose moiety from AdoMet to the 7-aminomethyl group of 7-deazaguanine (preQ1-tRNA) to give epoxyqueuosine (oQ-tRNA). The protein is S-adenosylmethionine:tRNA ribosyltransferase-isomerase of Francisella tularensis subsp. mediasiatica (strain FSC147).